We begin with the raw amino-acid sequence, 931 residues long: Probable ubiquitin-like-specific protease 2B (931 aa).

Residues Ser204–Trp224 are disordered. Acidic residues predominate over residues Ser215–Trp224. Catalysis depends on residues His489, Asp522, and Cys577. Positions His825–Lys931 are disordered. The segment covering Ser839 to Asp851 has biased composition (polar residues). Positions Asn873–Pro904 are enriched in basic and acidic residues.

The protein belongs to the peptidase C48 family.

Its function is as follows. Protease that catalyzes two essential functions in the SUMO pathway: processing of full-length SUMOs to their mature forms and deconjugation of SUMO from targeted proteins. This chain is Probable ubiquitin-like-specific protease 2B (ULP2B), found in Arabidopsis thaliana (Mouse-ear cress).